Reading from the N-terminus, the 223-residue chain is Ribose-5-phosphate isomerase A (223 aa).

Substrate-binding positions include 32–35 (TGST), 83–86 (DGAD), and 96–99 (KGGG). Residue Glu-105 is the Proton acceptor of the active site. Lys-123 lines the substrate pocket.

This sequence belongs to the ribose 5-phosphate isomerase family. As to quaternary structure, homodimer.

It carries out the reaction aldehydo-D-ribose 5-phosphate = D-ribulose 5-phosphate. It functions in the pathway carbohydrate degradation; pentose phosphate pathway; D-ribose 5-phosphate from D-ribulose 5-phosphate (non-oxidative stage): step 1/1. Functionally, catalyzes the reversible conversion of ribose-5-phosphate to ribulose 5-phosphate. This Acinetobacter baumannii (strain AYE) protein is Ribose-5-phosphate isomerase A.